The chain runs to 1670 residues: Collagen alpha-3(IV) chain (1670 aa).

The N-terminal stretch at 1-28 (MSARTAPRPQVLLLPLLLVLLAAAPAAS) is a signal peptide. The interval 29–42 (KGCVCKDKGQCFCD) is 7S domain. Residues 43-1438 (GAKGEKGEKG…KGKRGDSGSP (1396 aa)) form a triple-helical region region. Disordered regions lie at residues 49 to 78 (GEKG…QGPK), 167 to 469 (LDAK…DGPK), and 502 to 1442 (GRQG…ATWT). Positions 176–200 (PGAPGPQGLPGPPGFPGPVGPPGPP) are enriched in pro residues. The span at 202 to 212 (FFGFPGAMGPR) shows a compositional bias: low complexity. A compositionally biased stretch (basic and acidic residues) spans 217–231 (HMGERVIGHKGERGV). The span at 242 to 251 (GTVIVTLTGP) shows a compositional bias: low complexity. N-linked (GlcNAc...) asparagine glycosylation occurs at N253. Positions 253–266 (NRTDLKGEKGDKGA) are enriched in basic and acidic residues. Positions 382–394 (SPGSSRPGLRGAP) are enriched in low complexity. A compositionally biased stretch (basic and acidic residues) spans 402 to 411 (SKGERGRPGK). The segment covering 415-428 (GTPGSPGCAGSPGL) has biased composition (low complexity). Composition is skewed to pro residues over residues 429–438 (PGSPGPPGPP), 598–618 (PGDP…PPGY), and 654–675 (VPGP…PPGI). The short motif at 791–793 (RGD) is the Cell attachment site element. A compositionally biased stretch (pro residues) spans 900–909 (IGPPGPPGNP). Over residues 974–987 (VPGMPGLKGLKGLP) the composition is skewed to low complexity. Positions 996–998 (RGD) match the Cell attachment site motif. Composition is skewed to low complexity over residues 1013–1025 (IPGS…MPGS), 1094–1105 (LGPAGPEGAPGS), and 1118–1133 (HGDL…LGPP). Pro residues predominate over residues 1135–1148 (IRGPPGLPGFPGSP). Positions 1154–1156 (RGD) match the Cell attachment site motif. Low complexity-rich tracts occupy residues 1230 to 1250 (PGAI…RGSP) and 1290 to 1299 (PPGRLGAPGT). Positions 1306–1308 (RGD) match the Cell attachment site motif. Pro residues predominate over residues 1332 to 1341 (PPGPIGPKGP). 2 short sequence motifs (cell attachment site) span residues 1345–1347 (RGD) and 1432–1434 (RGD). The epitope recognized by Goodpasture antibodies stretch occupies residues 1427–1444 (GLKGKRGDSGSPATWTTR). The Collagen IV NC1 domain occupies 1445 to 1669 (GFVFTRHSQT…SRCQVCMKKR (225 aa)). Cystine bridges form between C1460-C1551, C1493-C1548, C1505-C1511, C1570-C1665, C1604-C1662, and C1616-C1622. The interval 1479 to 1557 (NQRAHGQDLG…CTVCEGPAIA (79 aa)) is required for the anti-angiogenic activity of tumstatin. Residue M1533 forms an S-Lysyl-methionine sulfilimine (Met-Lys) (interchain with K-1651) linkage. The tract at residues 1610 to 1628 (ASPFLECHGRGTCNYYSNS) is required for the anti-tumor cell activity of tumstatin. Residue K1651 forms an S-Lysyl-methionine sulfilimine (Lys-Met) (interchain with M-1533) linkage.

The protein belongs to the type IV collagen family. As to quaternary structure, there are six type IV collagen isoforms, alpha 1(IV)-alpha 6(IV), each of which can form a triple helix structure with 2 other chains to generate type IV collagen network. The alpha 3(IV) chain forms a triple helical protomer with alpha 4(IV) and alpha 5(IV); this triple helical structure dimerizes through NC1-NC1 domain interactions such that the alpha 3(IV), alpha 4(IV) and alpha 5(IV) chains of one protomer connect with the alpha 5(IV), alpha 4(IV) and alpha 3(IV) chains of the opposite promoter, respectively. Interacts with ITGB3. Associates with LAMB2 at the neuromuscular junction and in GBM. Prolines at the third position of the tripeptide repeating unit (G-X-Y) are hydroxylated in some or all of the chains. Post-translationally, isoform 2 contains an additional N-linked glycosylation site. In terms of processing, type IV collagens contain numerous cysteine residues which are involved in inter- and intramolecular disulfide bonding. 12 of these, located in the NC1 domain, are conserved in all known type IV collagens. The trimeric structure of the NC1 domains is stabilized by covalent bonds between Lys and Met residues. Post-translationally, phosphorylated. Thought to be phosphorylated by CERT, but CERT does not have kinase activity. As to expression, alpha 3 and alpha 4 type IV collagens are colocalized and present in kidney, eye, basement membranes of lens capsule, cochlea, lung, skeletal muscle, aorta, synaptic fibers, fetal kidney and fetal lung. PubMed:8083201 reports similar levels of expression of alpha 3 and alpha 4 type IV collagens in kidney, but PubMed:7523402 reports that in kidney levels of alpha 3 type IV collagen are significantly lower than those of alpha 4 type IV collagen. According to PubMed:8083201, alpha 3 type IV collagen is not detected in heart, brain, placenta, liver, pancreas, extrasynaptic muscle fibers, endoneurial and perineurial nerves, fetal brain, fetal heart and fetal liver. According to PubMed:7523402, alpha 3 type IV collagen is strongly expressed in pancreas, neuroretina and calvaria and not expressed in adrenal, ileum and skin. Isoform 1 and isoform 3 are strongly expressed in kidney, lung, suprarenal capsule, muscle and spleen, in each of these tissues isoform 1 is more abundant than isoform 3. Isoform 1 and isoform 3 are expressed at low levels in artery, fat, pericardium and peripherical nerve, but not in placenta, mesangium, skin, pleura and cultured umbilical endothelial cells.

The protein resides in the secreted. The protein localises to the extracellular space. It is found in the extracellular matrix. Its subcellular location is the basement membrane. Its function is as follows. Type IV collagen is the major structural component of glomerular basement membranes (GBM), forming a 'chicken-wire' meshwork together with laminins, proteoglycans and entactin/nidogen. Tumstatin, a cleavage fragment corresponding to the collagen alpha 3(IV) NC1 domain, possesses both anti-angiogenic and anti-tumor cell activity; these two anti-tumor properties may be regulated via RGD-independent ITGB3-mediated mechanisms. In Homo sapiens (Human), this protein is Collagen alpha-3(IV) chain (COL4A3).